The following is a 707-amino-acid chain: Elongation factor G 2 (707 aa).

The tr-type G domain occupies Glu8–Ala290. GTP-binding positions include Ala17 to Thr24, Asp88 to His92, and Asn142 to Asp145.

The protein belongs to the TRAFAC class translation factor GTPase superfamily. Classic translation factor GTPase family. EF-G/EF-2 subfamily.

The protein localises to the cytoplasm. Functionally, catalyzes the GTP-dependent ribosomal translocation step during translation elongation. During this step, the ribosome changes from the pre-translocational (PRE) to the post-translocational (POST) state as the newly formed A-site-bound peptidyl-tRNA and P-site-bound deacylated tRNA move to the P and E sites, respectively. Catalyzes the coordinated movement of the two tRNA molecules, the mRNA and conformational changes in the ribosome. This is Elongation factor G 2 from Bordetella bronchiseptica (strain ATCC BAA-588 / NCTC 13252 / RB50) (Alcaligenes bronchisepticus).